The following is a 264-amino-acid chain: S-adenosylmethionine decarboxylase proenzyme (264 aa).

Serine 112 functions as the Schiff-base intermediate with substrate; via pyruvic acid in the catalytic mechanism. Serine 112 is modified (pyruvic acid (Ser); by autocatalysis). Catalysis depends on histidine 117, which acts as the Proton acceptor; for processing activity. The active-site Proton donor; for catalytic activity is the cysteine 140.

The protein belongs to the prokaryotic AdoMetDC family. Type 2 subfamily. In terms of assembly, heterooctamer of four alpha and four beta chains arranged as a tetramer of alpha/beta heterodimers. Pyruvate serves as cofactor. Is synthesized initially as an inactive proenzyme. Formation of the active enzyme involves a self-maturation process in which the active site pyruvoyl group is generated from an internal serine residue via an autocatalytic post-translational modification. Two non-identical subunits are generated from the proenzyme in this reaction, and the pyruvate is formed at the N-terminus of the alpha chain, which is derived from the carboxyl end of the proenzyme. The post-translation cleavage follows an unusual pathway, termed non-hydrolytic serinolysis, in which the side chain hydroxyl group of the serine supplies its oxygen atom to form the C-terminus of the beta chain, while the remainder of the serine residue undergoes an oxidative deamination to produce ammonia and the pyruvoyl group blocking the N-terminus of the alpha chain.

It carries out the reaction S-adenosyl-L-methionine + H(+) = S-adenosyl 3-(methylsulfanyl)propylamine + CO2. It functions in the pathway amine and polyamine biosynthesis; S-adenosylmethioninamine biosynthesis; S-adenosylmethioninamine from S-adenosyl-L-methionine: step 1/1. Its function is as follows. Catalyzes the decarboxylation of S-adenosylmethionine to S-adenosylmethioninamine (dcAdoMet), the propylamine donor required for the synthesis of the polyamines spermine and spermidine from the diamine putrescine. The sequence is that of S-adenosylmethionine decarboxylase proenzyme from Yersinia pseudotuberculosis serotype O:1b (strain IP 31758).